A 777-amino-acid polypeptide reads, in one-letter code: Glucocorticoid receptor (777 aa).

Basic and acidic residues predominate over residues 1-14; sequence MDSKESLTPGREEN. The tract at residues 1 to 23 is disordered; it reads MDSKESLTPGREENPSSVLAQER. The interval 1–420 is modulating; it reads MDSKESLTPG…TATTGPPPKL (420 aa). At threonine 8 the chain carries Phosphothreonine. Arginine 23 is subject to Omega-N-methylarginine. Phosphoserine occurs at positions 45, 113, 134, and 141. Residues 130 to 140 are compositionally biased toward polar residues; that stretch reads NRSTSVPENPK. Residues 130–183 are disordered; sequence NRSTSVPENPKSSASTAVSAAPTEKEFPKTHSDISSEQQHLKGQTGTNGGNVKL. The span at 141–150 shows a compositional bias: low complexity; that stretch reads SSASTAVSAA. Basic and acidic residues predominate over residues 152 to 163; it reads TEKEFPKTHSDI. A compositionally biased stretch (polar residues) spans 164–174; it reads SSEQQHLKGQT. A phosphoserine mark is found at serine 203, serine 211, and serine 226. Lysine 258 participates in a covalent cross-link: Glycyl lysine isopeptide (Lys-Gly) (interchain with G-Cter in SUMO2). Phosphoserine is present on serine 267. Glycyl lysine isopeptide (Lys-Gly) (interchain with G-Cter in SUMO); alternate cross-links involve residues lysine 277 and lysine 293. Residues lysine 277 and lysine 293 each participate in a glycyl lysine isopeptide (Lys-Gly) (interchain with G-Cter in SUMO2); alternate cross-link. Residues 394–414 show a composition bias toward low complexity; it reads SSPSMRPDVSSPPSSSSTATT. A disordered region spans residues 394-415; that stretch reads SSPSMRPDVSSPPSSSSTATTG. Serine 404 carries the post-translational modification Phosphoserine. Lysine 419 is covalently cross-linked (Glycyl lysine isopeptide (Lys-Gly) (interchain with G-Cter in ubiquitin)). NR C4-type zinc fingers lie at residues 421-441 and 457-476; these read CLVCSDEASGCHYGVLTCGSC and CAGRNDCIIDKIRRKNCPAC. Residues 421–486 constitute a DNA-binding region (nuclear receptor); sequence CLVCSDEASG…RYRKCLQAGM (66 aa). N6-acetyllysine occurs at positions 480, 492, 494, and 495. An interaction with CLOCK region spans residues 485–777; that stretch reads GMNLEARKTK…NIKKLLFHQK (293 aa). The hinge stretch occupies residues 487–523; the sequence is NLEARKTKKKIKGIQQATTGVSQETPENPANKTIVPA. The NR LBD domain maps to 524-758; the sequence is TLPQLTPTLV…FPEMLAEIIT (235 aa). The interval 532–697 is interaction with CRY1; sequence LVSLLEVIEP…EIRMTYIKEL (166 aa). Lysine 703 participates in a covalent cross-link: Glycyl lysine isopeptide (Lys-Gly) (interchain with G-Cter in SUMO).

Belongs to the nuclear hormone receptor family. NR3 subfamily. Heteromultimeric cytoplasmic complex with HSP90AA1, HSPA1A/HSPA1B, and FKBP5 or another immunophilin such as PPID, STIP1, or the immunophilin homolog PPP5C. Upon ligand binding FKBP5 dissociates from the complex and FKBP4 takes its place, thereby linking the complex to dynein and mediating transport to the nucleus, where the complex dissociates. Probably forms a complex composed of chaperones HSP90 and HSP70, co-chaperones CDC37, PPP5C, TSC1 and client protein TSC2, CDK4, AKT, RAF1 and NR3C1; this complex does not contain co-chaperones STIP1/HOP and PTGES3/p23. Directly interacts with UNC45A. Binds to DNA as a homodimer, and as heterodimer with NR3C2 or the retinoid X receptor. Binds STAT5A and STAT5B homodimers and heterodimers. Interacts with NRIP1, POU2F1, POU2F2 and TRIM28. Interacts with several coactivator complexes, including the SMARCA4 complex, CREBBP/EP300, TADA2L (Ada complex) and p160 coactivators such as NCOA2 and NCOA6. Interaction with BAG1 inhibits transactivation. Interacts with HEXIM1 and TGFB1I1. Interacts with NCOA1. Interacts with NCOA3, SMARCA4, SMARCC1, SMARCD1, and SMARCE1. Interacts with CLOCK, CRY1 and CRY2 in a ligand-dependent fashion. Interacts with CIART. Interacts with RWDD3. Interacts with UBE2I/UBC9 and this interaction is enhanced in the presence of RWDD3. Interacts with GRIP1. Interacts with NR4A3 (via nuclear receptor DNA-binding domain), represses transcription activity of NR4A3 on the POMC promoter Nur response element (NurRE). Directly interacts with PNRC2 to attract and form a complex with UPF1 and DCP1A; the interaction leads to rapid mRNA degradation. Interacts with GSK3B. Interacts with FNIP1 and FNIP2. Interacts (via C-terminus) with HNRNPU (via C-terminus). Interacts with MCM3AP. Interacts (via domain NR LBD) with HSP90AA1 and HSP90AB1. In the absence of hormonal ligand, interacts with TACC1. Interacts (via NR LBD domain) with ZNF764 (via KRAB domain); the interaction regulates transcription factor activity of NR3C1 by directing its actions toward certain biologic pathways. Acetylation by CLOCK reduces its binding to glucocorticoid response elements and its transcriptional activity. In terms of processing, increased proteasome-mediated degradation in response to glucocorticoids. Post-translationally, phosphorylated in the absence of hormone; becomes hyperphosphorylated in the presence of glucocorticoid. The Ser-203, Ser-226 and Ser-404-phosphorylated forms are mainly cytoplasmic, and the Ser-211-phosphorylated form is nuclear. Phosphorylation at Ser-211 increases transcriptional activity. Phosphorylation at Ser-203, Ser-226 and Ser-404 decreases signaling capacity. Phosphorylation at Ser-404 may protect from glucocorticoid-induced apoptosis. Phosphorylation at Ser-203 and Ser-211 is not required in regulation of chromosome segregation. May be dephosphorylated by PPP5C, attenuates NR3C1 action. Ubiquitinated by UBR5, leading to its degradation: UBR5 specifically recognizes and binds ligand-bound NR3C1 when it is not associated with coactivators (NCOAs). In presence of NCOAs, the UBR5-degron is not accessible, preventing its ubiquitination and degradation. In terms of processing, sumoylation at Lys-277 and Lys-293 negatively regulates its transcriptional activity. Sumoylation at Lys-703 positively regulates its transcriptional activity in the presence of RWDD3. Sumoylation at Lys-277 and Lys-293 is dispensable whereas sumoylation at Lys-703 is critical for the stimulatory effect of RWDD3 on its transcriptional activity. Heat shock increases sumoylation in a RWDD3-dependent manner.

Its subcellular location is the cytoplasm. The protein localises to the nucleus. It is found in the mitochondrion. The protein resides in the cytoskeleton. It localises to the spindle. Its subcellular location is the microtubule organizing center. The protein localises to the centrosome. It is found in the chromosome. The protein resides in the nucleoplasm. Functionally, receptor for glucocorticoids (GC). Has a dual mode of action: as a transcription factor that binds to glucocorticoid response elements (GRE), both for nuclear and mitochondrial DNA, and as a modulator of other transcription factors. Affects inflammatory responses, cellular proliferation and differentiation in target tissues. Involved in chromatin remodeling. Plays a role in rapid mRNA degradation by binding to the 5' UTR of target mRNAs and interacting with PNRC2 in a ligand-dependent manner which recruits the RNA helicase UPF1 and the mRNA-decapping enzyme DCP1A, leading to RNA decay. Could act as a coactivator for STAT5-dependent transcription upon growth hormone (GH) stimulation and could reveal an essential role of hepatic GR in the control of body growth. Mediates glucocorticoid-induced apoptosis. Promotes accurate chromosome segregation during mitosis. May act as a tumor suppressor. May play a negative role in adipogenesis through the regulation of lipolytic and antilipogenic gene expression. The polypeptide is Glucocorticoid receptor (NR3C1) (Pongo abelii (Sumatran orangutan)).